The primary structure comprises 308 residues: N-acetylneuraminate lyase (308 aa).

Aceneuramate is bound by residues T50 and T51. The Proton donor role is filled by Y142. K172 functions as the Schiff-base intermediate with substrate in the catalytic mechanism. Residues S174, G198, D200, E201, and S217 each coordinate aceneuramate.

The protein belongs to the DapA family. NanA subfamily. In terms of assembly, homotetramer.

It localises to the cytoplasm. It catalyses the reaction aceneuramate = aldehydo-N-acetyl-D-mannosamine + pyruvate. It participates in amino-sugar metabolism; N-acetylneuraminate degradation. Functionally, catalyzes the cleavage of N-acetylneuraminic acid (sialic acid) to form pyruvate and N-acetylmannosamine via a Schiff base intermediate. It prevents sialic acids from being recycled and returning to the cell surface. Involved in the N-glycolylneuraminic acid (Neu5Gc) degradation pathway. The sequence is that of N-acetylneuraminate lyase from Gallus gallus (Chicken).